Here is a 773-residue protein sequence, read N- to C-terminus: DC-STAMP domain-containing protein 2 (773 aa).

Over 1-26 (MPKVMKDVVHPLGGEEPSMARAVVRS) the chain is Cytoplasmic. Residues 27–47 (VGGFTLGLSLATAYGLLELLV) traverse the membrane as a helical segment. Topologically, residues 48–51 (EGHS) are extracellular. The helical transmembrane segment at 52 to 72 (PWGCLVGTLTLAAFLSLGMGF) threads the bilayer. The Cytoplasmic segment spans residues 73-233 (SRQVRATVLL…IPQAYHLCYV (161 aa)). The helical transmembrane segment at 234–254 (LMPFKLALCGLASLVQVFCVI) threads the bilayer. The Extracellular portion of the chain corresponds to 255 to 322 (PKYIQPFLRQ…SMKLHRVREA (68 aa)). Asn284 and Asn296 each carry an N-linked (GlcNAc...) asparagine glycan. Residues 323–343 (LALMGFTTPLLLVLLYLQALF) traverse the membrane as a helical segment. The Cytoplasmic portion of the chain corresponds to 344–415 (YRYCYLNWDH…ILETFNLIRH (72 aa)). The helical transmembrane segment at 416 to 436 (LLLVLFLVFLDYAVFWVLDLA) threads the bilayer. Residues 437-499 (RHQLQGEIVA…LRPSEPDSTG (63 aa)) are Extracellular-facing. Asn480 carries N-linked (GlcNAc...) asparagine glycosylation. The helical transmembrane segment at 500–520 (YIVIGVMYGLCFFITLFGSYV) threads the bilayer. Over 521–773 (SRLRRVICAS…LPDPSHPPPK (253 aa)) the chain is Cytoplasmic. Positions 692 to 701 (SLSMESTSES) are enriched in low complexity. Residues 692-773 (SLSMESTSES…LPDPSHPPPK (82 aa)) form a disordered region. Residues 758-773 (PLSPPSLPDPSHPPPK) show a composition bias toward pro residues.

Interacts with DCST1.

Its subcellular location is the cytoplasmic vesicle. The protein resides in the secretory vesicle. It is found in the acrosome membrane. Its function is as follows. Essential sperm cell-surface protein required for sperm-egg fusion and fertilization. In Homo sapiens (Human), this protein is DC-STAMP domain-containing protein 2 (DCST2).